A 98-amino-acid polypeptide reads, in one-letter code: uncharacterized protein (98 aa).

The span at methionine 1 to arginine 10 shows a compositional bias: basic residues. Positions methionine 1–arginine 21 are disordered.

This is an uncharacterized protein from Mycobacterium bovis (strain ATCC BAA-935 / AF2122/97).